The following is a 120-amino-acid chain: Large ribosomal subunit protein uL18 (120 aa).

This sequence belongs to the universal ribosomal protein uL18 family. In terms of assembly, part of the 50S ribosomal subunit; part of the 5S rRNA/L5/L18/L25 subcomplex. Contacts the 5S and 23S rRNAs.

Its function is as follows. This is one of the proteins that bind and probably mediate the attachment of the 5S RNA into the large ribosomal subunit, where it forms part of the central protuberance. In Bartonella henselae (strain ATCC 49882 / DSM 28221 / CCUG 30454 / Houston 1) (Rochalimaea henselae), this protein is Large ribosomal subunit protein uL18.